Reading from the N-terminus, the 433-residue chain is ATP-dependent protease ATPase subunit HslU (433 aa).

ATP-binding positions include Val18, 60–65 (GVGKTE), Asp246, Glu311, and Arg383.

The protein belongs to the ClpX chaperone family. HslU subfamily. A double ring-shaped homohexamer of HslV is capped on each side by a ring-shaped HslU homohexamer. The assembly of the HslU/HslV complex is dependent on binding of ATP.

The protein localises to the cytoplasm. Its function is as follows. ATPase subunit of a proteasome-like degradation complex; this subunit has chaperone activity. The binding of ATP and its subsequent hydrolysis by HslU are essential for unfolding of protein substrates subsequently hydrolyzed by HslV. HslU recognizes the N-terminal part of its protein substrates and unfolds these before they are guided to HslV for hydrolysis. The sequence is that of ATP-dependent protease ATPase subunit HslU from Rhodopseudomonas palustris (strain ATCC BAA-98 / CGA009).